A 267-amino-acid polypeptide reads, in one-letter code: Glutamate racemase (267 aa).

Substrate-binding positions include 9–10 and 41–42; these read DS and YS. The active-site Proton donor/acceptor is the C73. 74 to 75 is a substrate binding site; it reads NT. The active-site Proton donor/acceptor is the C184. Residue 185-186 coordinates substrate; it reads TH.

This sequence belongs to the aspartate/glutamate racemases family.

It carries out the reaction L-glutamate = D-glutamate. Its pathway is cell wall biogenesis; peptidoglycan biosynthesis. In terms of biological role, provides the (R)-glutamate required for cell wall biosynthesis. The protein is Glutamate racemase of Glaesserella parasuis serovar 5 (strain SH0165) (Haemophilus parasuis).